A 279-amino-acid chain; its full sequence is Probable flavonol synthase 4 (279 aa).

The interval 1 to 25 is disordered; it reads MEVERDQHKPPLSLQNNKIPSSQNF. Positions 13–25 are enriched in polar residues; the sequence is SLQNNKIPSSQNF. One can recognise a Fe2OG dioxygenase domain in the interval 156–256; it reads GAGYLMKINY…RMSSVVHIKP (101 aa). 164 to 166 contributes to the 2-oxoglutarate binding site; it reads NYY. Residues H181, D183, and H237 each coordinate Fe cation. A 2-oxoglutarate-binding site is contributed by 247–249; sequence RMS.

This sequence belongs to the iron/ascorbate-dependent oxidoreductase family. The cofactor is Fe(2+).

It catalyses the reaction a (2R,3R)-dihydroflavonol + 2-oxoglutarate + O2 = a flavonol + succinate + CO2 + H2O. It participates in secondary metabolite biosynthesis; flavonoid biosynthesis. The sequence is that of Probable flavonol synthase 4 (FLS4) from Arabidopsis thaliana (Mouse-ear cress).